Reading from the N-terminus, the 1996-residue chain is Non-reducing polyketide synthase atnG (1996 aa).

The tract at residues 9–245 is N-terminal acylcarrier protein transacylase (SAT) domain; that stretch reads FLFGDQADAP…AELPAFGAVH (237 aa). The region spanning 366–794 is the Ketosynthase family 3 (KS3) domain; sequence SGSVAVIGMS…GGNSCFVLEE (429 aa). Residues cysteine 538, histidine 673, and histidine 713 each act as for beta-ketoacyl synthase activity in the active site. The tract at residues 891 to 1150 is malonyl-CoA:ACP transacylase (MAT) domain; the sequence is AFAFTGQGAH…VKYTQAISHC (260 aa). Serine 982 acts as the For acyl/malonyl transferase activity in catalysis. Residues 1263-1392 form an N-terminal hotdog fold region; the sequence is HHLVSQDDNG…CCIRQTDEQD (130 aa). The PKS/mFAS DH domain occupies 1263-1569; that stretch reads HHLVSQDDNG…FRKMPRTTLH (307 aa). A product template (PT) domain region spans residues 1267 to 1568; sequence SQDDNGKEQS…RFRKMPRTTL (302 aa). Catalysis depends on histidine 1295, which acts as the Proton acceptor; for dehydratase activity. The C-terminal hotdog fold stretch occupies residues 1416-1569; that stretch reads ASGIANRFQG…FRKMPRTTLH (154 aa). Aspartate 1481 serves as the catalytic Proton donor; for dehydratase activity. The segment at 1573–1621 is disordered; it reads GKAVPPKPAKETSHPSVEATAPATTNGRSSATNAQAEAPAPPVNGSNGH. Over residues 1594–1607 the composition is skewed to polar residues; that stretch reads PATTNGRSSATNAQ. The Carrier domain occupies 1620 to 1697; it reads GHRKTVESVL…DAQRQLRTLE (78 aa). Serine 1657 carries the O-(pantetheine 4'-phosphoryl)serine modification. Residues 1725-1923 form a thioesterase (TE) domain region; that stretch reads KRECNVVLMQ…ERTFVVWAKK (199 aa).

The protein operates within secondary metabolite biosynthesis; terpenoid biosynthesis. Functionally, non-reducing polyketide synthase; part of the gene cluster that mediates the biosynthesis of the meroterpenoids arthripenoids. The pathway begins with the HR-PKS atnH that catalyzes two chain-extension steps to form a reduced triketide, which then primes the SAT domain in the NR-PKS atnG to initiate three more cycles of extension to give a linear hexaketide corresponding to the polyketide part of arthripenoids. The FAD-dependent monooxygenase atnJ then performs an oxidative decarboxylation at C11 of the atnH/atnG product, via an electrophilic aromatic hydroxylation with concomitant ipso-decarboxylation. The membrane-bound polyprenyl transferase atnF then introduces a farnesyl group before the FAD-dependent monooxygenase atnK functions as the first epoxidase on terminal C12'-C13' olefin, followed by a second epoxidation on C7'-C8' catalyzed by atnA. The terpene cyclase/mutase atnI then initiates the sequential tricyclic ring formation through protonation of the terminal epoxide and catalyzes the regioselective and stereoselective 6/6/6-tricyclic ring formation. The cytochrome P450 monooxygenase atnM is responsible for hydroxylating both C1' and C10'. The next steps may involve ketoreduction and acetyl transfer by the ketoreductase atnB and the acetyltransferase atnC, and lead to the production of arthripenoid B, the final biosynthetic product of the atn cluster. The hydroquinone moiety in arthripenoid B is prone to undergo spontaneous oxidation to afford a benzoquinone compound, a key intermediate for generating structure diversity. For instance, addition of a cysteine followed by ring contraction gives arthripenoid A, tautomerization gives the main product arthripenoid C, addition of a molecular of water or amine affords arthripenoid D or E, respectively, and loss of one water forms arthripenoid F. This Arthrinium sp protein is Non-reducing polyketide synthase atnG.